Here is a 123-residue protein sequence, read N- to C-terminus: Ragulator complex protein LAMTOR3-B (123 aa).

It belongs to the LAMTOR3 family. Part of the Ragulator complex composed of lamtor1, lamtor2, lamtor3, lamtor4 and lamtor5. The Ragulator complex interacts with slc38a9; the probable amino acid sensor. Component of the lysosomal folliculin complex (LFC).

The protein resides in the late endosome membrane. In terms of biological role, as part of the Ragulator complex it is involved in amino acid sensing and activation of mTORC1, a signaling complex promoting cell growth in response to growth factors, energy levels, and amino acids. Activated by amino acids through a mechanism involving the lysosomal V-ATPase, the Ragulator plays a dual role for the small GTPases Rag (RagA/RRAGA, RagB/RRAGB, RagC/RRAGC and/or RagD/RRAGD): it (1) acts as a guanine nucleotide exchange factor (GEF), activating the small GTPases Rag and (2) mediates recruitment of Rag GTPases to the lysosome membrane. Activated Ragulator and Rag GTPases function as a scaffold recruiting mTORC1 to lysosomes where it is in turn activated. This Xenopus laevis (African clawed frog) protein is Ragulator complex protein LAMTOR3-B (lamtor3-b).